The following is a 561-amino-acid chain: DNA ligase (561 aa).

Glu249 is an ATP binding site. Lys251 (N6-AMP-lysine intermediate) is an active-site residue. The ATP site is built by Arg256, Arg271, Glu301, Phe340, Arg417, and Lys423.

It belongs to the ATP-dependent DNA ligase family. Mg(2+) is required as a cofactor.

The enzyme catalyses ATP + (deoxyribonucleotide)n-3'-hydroxyl + 5'-phospho-(deoxyribonucleotide)m = (deoxyribonucleotide)n+m + AMP + diphosphate.. DNA ligase that seals nicks in double-stranded DNA during DNA replication, DNA recombination and DNA repair. The polypeptide is DNA ligase (Methanothermobacter thermautotrophicus (strain ATCC 29096 / DSM 1053 / JCM 10044 / NBRC 100330 / Delta H) (Methanobacterium thermoautotrophicum)).